Reading from the N-terminus, the 132-residue chain is Pre-histone-like nucleoprotein (132 aa).

Positions Ala-2 to Gly-23 are excised as a propeptide. A Nuclear localization signal motif is present at residues Arg-124–Lys-132.

This sequence belongs to the adenoviridae histone-like nucleoprotein family. As to quaternary structure, interacts with the core-capsid bridging protein; this interaction bridges the virus core to the capsid. Interacts with host NPM1; this interaction might play a role in placing the pre-histone-like nucleoprotein on the viral DNA or regulating viral gene expression. Interacts with host HMGB1; this interaction inhibits host immune response. Post-translationally, cleaved near the N-terminus by the viral protease during virion maturation to form the mature protein.

The protein localises to the virion. The protein resides in the host nucleus. Its subcellular location is the host nucleolus. Plays a role in the inhibition of host immune response within the nucleus. Interacts with cellular nucleosomes and immobilizes the host immune danger signal HMGB1 on chromatin. In turn, prevents HMGB1 release out of the cell and thus decreases inflammation. Also plays a role in the wrapping and condensation of the viral DNA. May also promote viral genome import into the nucleus. This chain is Pre-histone-like nucleoprotein, found in Canine adenovirus serotype 1 (strain RI261) (CAdV-1).